The sequence spans 4652 residues: Low-density lipoprotein receptor-related protein 2 (4652 aa).

Positions 1–25 (MERWAAAAACTLLLAFAACLAPASG) are cleaved as a signal peptide. Topologically, residues 26-4422 (RECLGNEFRC…SKGISPGTTV (4397 aa)) are extracellular. LDL-receptor class A domains lie at 27–63 (ECLG…IGCP), 66–104 (TCGS…QRCP), 108–144 (TCSS…INCR), 142–181 (NCRY…LNCT), 183–219 (RCLR…HSCS), 223–259 (PCKG…DGCE), and 267–308 (ECYP…RVCD). 21 disulfide bridges follow: C28–C40, C35–C53, C47–C62, C67–C80, C74–C93, C87–C103, C109–C121, C116–C134, C128–C143, C143–C158, C153–C171, C165–C180, C184–C196, C191–C209, C203–C218, C224–C236, C231–C249, C243–C258, C268–C281, C275–C294, and C288–C307. 2 N-linked (GlcNAc...) asparagine glycosylation sites follow: N160 and N179. An N-linked (GlcNAc...) asparagine glycan is attached at N341. The 39-residue stretch at 348 to 386 (DFNDCQIWGICDHFCEDRIGHHQCFCAEGYVLEHEQHCR) folds into the EGF-like 1; calcium-binding domain. Intrachain disulfides connect C352/C362, C358/C371, and C373/C385. An N-linked (GlcNAc...) asparagine glycan is attached at N388. 8 LDL-receptor class B repeats span residues 436–478 (SKVF…DWIN), 479–521 (NKLY…DPTV), 522–568 (GYLF…DLVA), 569–613 (KRVY…FEDN), 753–795 (NAIF…DWIS), 796–837 (RNLY…HPIA), 838–881 (GYIF…DWGS), and 882–925 (SRLY…FGEY). N771 carries an N-linked (GlcNAc...) asparagine glycan. A glycan (N-linked (GlcNAc...) asparagine) is linked at N866. N1015 carries an N-linked (GlcNAc...) asparagine glycan. Residues 1025–1061 (QCGALSFPCNNGRCVPLHYRCDGVDDCHDNSDEVQCG) enclose the LDL-receptor class A 8 domain. Cystine bridges form between C1026–C1038, C1033–C1051, and C1045–C1060. An N-linked (GlcNAc...) asparagine glycan is attached at N1064. LDL-receptor class A domains lie at 1066–1104 (SCAP…QNCS), 1110–1146 (SCRA…KRCD), 1150–1186 (TCSP…SACV), 1188–1225 (NCTD…IDCP), 1231–1269 (MCRQ…SGCP), 1272–1308 (TCPX…KDCP), and 1313–1351 (LCPS…PLCN). Intrachain disulfides connect C1067–C1081, C1074–C1094, C1088–C1103, C1111–C1123, C1118–C1136, C1130–C1145, C1151–C1163, C1158–C1176, and C1170–C1185. N1102 carries N-linked (GlcNAc...) asparagine glycosylation. Ca(2+) contacts are provided by W1128, D1131, D1133, D1135, D1141, and E1142. N1188 carries an N-linked (GlcNAc...) asparagine glycan. 12 disulfides stabilise this stretch: C1189/C1202, C1196/C1215, C1209/C1224, C1232/C1245, C1239/C1258, C1252/C1268, C1273/C1285, C1280/C1298, C1292/C1307, C1314/C1327, C1321/C1340, and C1334/C1350. Ca(2+)-binding residues include Y1207, D1210, V1212, D1214, D1220, and E1221. N1329 carries an N-linked (GlcNAc...) asparagine glycan. 4 N-linked (GlcNAc...) asparagine glycosylation sites follow: N1385, N1452, N1498, and N1552. LDL-receptor class B repeat units lie at residues 1480 to 1522 (GRIF…DWVG), 1523 to 1565 (RNLY…DPRV), 1568 to 1611 (RVIF…DYPT), 1612 to 1654 (RLLY…TIFE), 1655 to 1696 (DSIY…VHPA), 1789 to 1831 (QFLY…DWLS), 1832 to 1881 (RNLY…DPAK), 1882 to 1929 (GKLY…DIQE), 1930 to 1971 (QKLY…YGPY), and 1972 to 2012 (LYYA…YRRR). N1677 and N1809 each carry an N-linked (GlcNAc...) asparagine glycan. N-linked (GlcNAc...) asparagine glycosylation occurs at N2053. LDL-receptor class B repeat units follow at residues 2105-2154 (GFVY…DWVA), 2155-2199 (GNLY…DPKN), 2200-2243 (RYLF…DHNS), 2244-2287 (GYIY…FGNS), 2429-2475 (NRIY…DWIG), 2476-2516 (RRIY…DPCQ), 2517-2560 (GYMY…DYKE), 2561-2602 (NLLY…YGQY), and 2603-2644 (IYWT…VVNN). N2175 and N2222 each carry an N-linked (GlcNAc...) asparagine glycan. An N-linked (GlcNAc...) asparagine glycan is attached at N2485. 10 consecutive LDL-receptor class A domains span residues 2696–2734 (RCNS…TLCA), 2737–2773 (TCPP…SGCR), 2776–2815 (SCNI…KNCA), 2818–2857 (TCLP…IYCV), 2860–2897 (TCKN…ATCV), 2902–2941 (TCSS…HHCE), 2944–2986 (NCSS…QNCT), 2989–3025 (NCSG…RNCK), 3028–3066 (ACDE…HLCH), and 3071–3107 (TCPP…ERCG). Cystine bridges form between C2697–C2709, C2704–C2722, C2716–C2733, C2738–C2750, C2745–C2763, C2757–C2772, C2777–C2790, C2785–C2803, C2797–C2814, C2819–C2832, C2826–C2845, C2839–C2856, C2861–C2873, C2868–C2886, C2880–C2896, C2903–C2915, C2910–C2928, and C2922–C2940. Residue N2698 is glycosylated (N-linked (GlcNAc...) asparagine). N2778 is a glycosylation site (N-linked (GlcNAc...) asparagine). N-linked (GlcNAc...) asparagine glycans are attached at residues N2806 and N2807. N-linked (GlcNAc...) asparagine glycosylation is present at N2944. Cystine bridges form between C2945–C2962, C2952–C2975, and C2969–C2985. Residues N2984 and N2989 are each glycosylated (N-linked (GlcNAc...) asparagine). 9 cysteine pairs are disulfide-bonded: C2990/C3002, C2997/C3015, C3009/C3024, C3029/C3041, C3036/C3054, C3048/C3065, C3072/C3084, C3079/C3097, and C3091/C3106. N-linked (GlcNAc...) asparagine glycosylation occurs at N3122. An EGF-like 2; calcium-binding domain is found at 3149 to 3189 (DIDECKETPSVCSQKCENLLGSYICKCAPGYTREPDGRSCR). 3 disulfides stabilise this stretch: C3153-C3164, C3160-C3173, and C3175-C3188. 4 N-linked (GlcNAc...) asparagine glycosylation sites follow: N3208, N3254, N3312, and N3352. 5 LDL-receptor class B repeats span residues 3236–3278 (ERLY…DWVT), 3279–3321 (RKLY…DKPR), 3330–3373 (GYVY…DYTN), 3374–3417 (DLLY…FEDT), and 3418–3458 (IYWT…YHPY). N3435 and N3444 each carry an N-linked (GlcNAc...) asparagine glycan. LDL-receptor class A domains follow at residues 3509–3547 (MCSS…NTCP), 3550–3588 (FCRL…VLCE), 3591–3629 (RCES…SHCA), 3632–3670 (TCLP…QECM), 3675–3713 (RCDN…QNCE), 3716–3753 (TCKP…ENCV), 3756–3792 (QCSE…RDCE), 3795–3831 (TCHP…ATCP), and 3839–3877 (YCPA…HLCL). 27 disulfide bridges follow: C3510/C3523, C3517/C3536, C3530/C3546, C3551/C3563, C3558/C3576, C3570/C3587, C3592/C3604, C3599/C3617, C3611/C3628, C3633/C3645, C3640/C3658, C3652/C3669, C3676/C3690, C3684/C3703, C3697/C3712, C3717/C3730, C3725/C3743, C3737/C3752, C3757/C3769, C3764/C3782, C3776/C3791, C3796/C3808, C3803/C3821, C3815/C3830, C3840/C3852, C3847/C3865, and C3859/C3876. N-linked (GlcNAc...) asparagine glycosylation occurs at N3562. N3678 carries N-linked (GlcNAc...) asparagine glycosylation. N3878 carries N-linked (GlcNAc...) asparagine glycosylation. LDL-receptor class A domains lie at 3880–3919 (TCDL…ENCL) and 3925–3961 (PCTE…TGCN). Intrachain disulfides connect C3881-C3894, C3889-C3907, C3901-C3918, C3926-C3938, C3933-C3951, C3945-C3960, C3968-C3977, C3973-C3987, C3989-C4003, C4009-C4019, C4015-C4028, and C4030-C4045. One can recognise an EGF-like 3 domain in the interval 3964–4004 (EERSCAENLCEHNCTQLIGGGFICSCRPGFKASSLNRNSCE). N3976 carries an N-linked (GlcNAc...) asparagine glycan. Residues 4005 to 4046 (DINECEQFGVCPQNCHNTKGSYECTCAEGFRSMSEHYGERCA) enclose the EGF-like 4; calcium-binding domain. A glycan (N-linked (GlcNAc...) asparagine) is linked at N4066. LDL-receptor class B repeat units follow at residues 4152-4194 (RHIY…NPKQ), 4195-4238 (GLMY…DYVN), and 4240-4281 (DRIY…FESQ). Residue N4325 is glycosylated (N-linked (GlcNAc...) asparagine). The EGF-like 5 domain maps to 4375–4409 (MPPPCRCMNEGNCYFDKNNLPKCKCPSGYMGEYCE). 3 cysteine pairs are disulfide-bonded: C4379–C4387, C4381–C4397, and C4399–C4408. Residues 4423-4443 (AVLVTLILIIIIGGLVALGFF) form a helical membrane-spanning segment. Residues 4444–4652 (HYRKTGSILI…ANLVREDSEA (209 aa)) are Cytoplasmic-facing. Residues 4450 to 4459 (SILISMPRLP) carry the SH3-binding motif. The PxLPxI/L motif 1; mediates interaction with ANKRA2 signature appears at 4453 to 4458 (ISMPRL). Residues 4456-4461 (PRLPSL) carry the PxLPxI/L motif 2; mediates interaction with ANKRA2 motif. A Phosphoserine modification is found at S4460. Positions 4518 to 4523 (FENPMY) match the Endocytosis signal motif. Positions 4536-4553 (TTTQVSESGNVYNKNYGS) are enriched in polar residues. The interval 4536 to 4652 (TTTQVSESGN…ANLVREDSEA (117 aa)) is disordered. Position 4568 is a phosphoserine (S4568). The interval 4588 to 4601 (QNTNFENPIYAETE) is interaction with DAB2. Residues 4594–4597 (NPIY) carry the NPXY motif motif. The SH2-binding motif lies at 4597–4600 (YAET). Positions 4610-4621 (VTPPPSPSPPAK) match the SH3-binding motif. S4615 is modified (phosphoserine). Residues 4626–4636 (KGTTPAYSATE) show a composition bias toward polar residues. T4629 is modified (phosphothreonine). The residue at position 4650 (S4650) is a Phosphoserine.

It belongs to the LDLR family. As to quaternary structure, binds plasminogen, extracellular matrix components, plasminogen activator-plasminogen activator inhibitor type I complex, apolipoprotein E-enriched beta-VLDL, lipoprotein lipase, lactoferrin, CLU/clusterin and calcium. Forms a multimeric complex together with LRPAP1. Interacts (via PxLPxI/L motif) with ANKRA2 (via ankyrin repeats). Interacts with LRP2BP. Interacts (via NPXY motif) with DAB2; the interaction is not affected by tyrosine phosphorylation of the NPXY motif. Interacts with MB. Interacts with BMP4. Interacts with the Sonic hedgehog protein N-product which is the active product of SHH. Interacts with CST3 in a calcium-dependent manner. Interacts with the vitamin-D binding protein GC/DBP. Interacts with sex hormone-binding protein SHBG. Interacts with angiotensin-2. Also interacts with angiotensin 1-7. Interacts with APOM. Interacts with selenoprotein SEPP1. Interacts with LEP. Interacts with ALB. Interacts with the antiapoptotic protein BIRC5/survivin. Interacts with matrix metalloproteinase MMP2 in complex with metalloproteinase inhibitor TIMP1. In neurons, forms a trimeric complex with APP and APPB1/FE65. Interacts with LDLRAP1/ARH; mediates trafficking of LRP2 to the endocytic recycling compartment. Does not interact with beta-amyloid protein 40 alone but interacts with the complex composed of beta-amyloid protein 40 and CLU/APOJ. Interacts with MDK. Post-translationally, a fraction undergoes proteolytic cleavage of the extracellular domain at the cell membrane to generate a cytoplasmic tail fragment. This is internalized into the early endosome from where it trafficks in an LDLRAP1/ARH-dependent manner to the endocytic recycling compartment (ERC). In the ERC, it is further cleaved by gamma-secretase to release a fragment which translocates to the nucleus and mediates transcriptional repression. N-glycosylation is required for ligand binding.

It localises to the apical cell membrane. It is found in the endosome lumen. Its subcellular location is the membrane. The protein localises to the clathrin-coated pit. The protein resides in the cell projection. It localises to the dendrite. It is found in the axon. Functionally, multiligand endocytic receptor. Acts together with CUBN to mediate endocytosis of high-density lipoproteins. Mediates receptor-mediated uptake of polybasic drugs such as aprotinin, aminoglycosides and polymyxin B. In the kidney, mediates the tubular uptake and clearance of leptin. Also mediates transport of leptin across the blood-brain barrier through endocytosis at the choroid plexus epithelium. Endocytosis of leptin in neuronal cells is required for hypothalamic leptin signaling and leptin-mediated regulation of feeding and body weight. Mediates endocytosis and subsequent lysosomal degradation of CST3 in kidney proximal tubule cells. Mediates renal uptake of 25-hydroxyvitamin D3 in complex with the vitamin D3 transporter GC/DBP. Mediates renal uptake of metallothionein-bound heavy metals. Together with CUBN, mediates renal reabsorption of myoglobin. Mediates renal uptake and subsequent lysosomal degradation of APOM. Plays a role in kidney selenium homeostasis by mediating renal endocytosis of selenoprotein SEPP1. Mediates renal uptake of the antiapoptotic protein BIRC5/survivin which may be important for functional integrity of the kidney. Mediates renal uptake of matrix metalloproteinase MMP2 in complex with metalloproteinase inhibitor TIMP1. Mediates endocytosis of Sonic hedgehog protein N-product (ShhN), the active product of SHH. Also mediates ShhN transcytosis. In the embryonic neuroepithelium, mediates endocytic uptake and degradation of BMP4, is required for correct SHH localization in the ventral neural tube and plays a role in patterning of the ventral telencephalon. Required at the onset of neurulation to sequester SHH on the apical surface of neuroepithelial cells of the rostral diencephalon ventral midline and to control PTCH1-dependent uptake and intracellular trafficking of SHH. During neurulation, required in neuroepithelial cells for uptake of folate bound to the folate receptor FOLR1 which is necessary for neural tube closure. In the adult brain, negatively regulates BMP signaling in the subependymal zone which enables neurogenesis to proceed. In astrocytes, mediates endocytosis of ALB which is required for the synthesis of the neurotrophic factor oleic acid. Involved in neurite branching. During optic nerve development, required for SHH-mediated migration and proliferation of oligodendrocyte precursor cells. Mediates endocytic uptake and clearance of SHH in the retinal margin which protects retinal progenitor cells from mitogenic stimuli and keeps them quiescent. Plays a role in reproductive organ development by mediating uptake in reproductive tissues of androgen and estrogen bound to the sex hormone binding protein SHBG. Mediates endocytosis of angiotensin-2. Also mediates endocytosis of angiotensis 1-7. Binds to the complex composed of beta-amyloid protein 40 and CLU/APOJ and mediates its endocytosis and lysosomal degradation. Required for embryonic heart development. Required for normal hearing, possibly through interaction with estrogen in the inner ear. The polypeptide is Low-density lipoprotein receptor-related protein 2 (Sus scrofa (Pig)).